The following is a 318-amino-acid chain: ADP-L-glycero-D-manno-heptose-6-epimerase (318 aa).

NADP(+)-binding positions include 10–11, 31–32, Lys38, Lys53, 80–84, and Asn97; these read FI, DD, and EGACS. The Proton acceptor role is filled by Tyr144. Lys148 is a binding site for NADP(+). Asn173 provides a ligand contact to substrate. Residues Val174 and Lys182 each contribute to the NADP(+) site. Catalysis depends on Lys182, which acts as the Proton acceptor. Residues Lys184, His191, 205 to 208, Arg218, and Tyr282 each bind substrate; that span reads FGAW.

Belongs to the NAD(P)-dependent epimerase/dehydratase family. HldD subfamily. Homopentamer. NADP(+) serves as cofactor.

The catalysed reaction is ADP-D-glycero-beta-D-manno-heptose = ADP-L-glycero-beta-D-manno-heptose. The protein operates within nucleotide-sugar biosynthesis; ADP-L-glycero-beta-D-manno-heptose biosynthesis; ADP-L-glycero-beta-D-manno-heptose from D-glycero-beta-D-manno-heptose 7-phosphate: step 4/4. In terms of biological role, catalyzes the interconversion between ADP-D-glycero-beta-D-manno-heptose and ADP-L-glycero-beta-D-manno-heptose via an epimerization at carbon 6 of the heptose. In Chromohalobacter salexigens (strain ATCC BAA-138 / DSM 3043 / CIP 106854 / NCIMB 13768 / 1H11), this protein is ADP-L-glycero-D-manno-heptose-6-epimerase.